The primary structure comprises 635 residues: Cytoplasmic polyadenylation element-binding protein 4 (635 aa).

Disordered stretches follow at residues 1–70 (MQDD…TLRL), 149–284 (GFGG…GFNT), and 337–369 (LFPM…PHQN). Polar residues predominate over residues 14–30 (PQLQQESQEGQDKQTLS). The segment covering 166–182 (PSPHPHFQHPHNQHRRS) has biased composition (basic residues). Over residues 216–231 (GSYQSPSSTPSSTSWS) the composition is skewed to low complexity. Residues 232-241 (PGGGYGGWGS) are compositionally biased toward gly residues. The span at 254 to 283 (PLNSISPLKKSFPNNQTQTQKYPRNNSGFN) shows a compositional bias: polar residues. The span at 341–353 (EDERSYGEDERSD) shows a compositional bias: basic and acidic residues. 2 RRM domains span residues 378–469 (RKVF…PWNL) and 486–568 (KTIF…PYVL).

Belongs to the RRM CPEB family.

Its subcellular location is the cytoplasm. The protein localises to the cell projection. It is found in the dendrite. It localises to the dendritic spine. The protein resides in the postsynaptic density. Its subcellular location is the axon. The protein localises to the growth cone. It is found in the endoplasmic reticulum. It localises to the perinuclear region. Sequence-specific RNA-binding protein that binds to the cytoplasmic polyadenylation element (CPE), an uridine-rich sequence element (consensus sequence 5'-UUUUUAU-3') within the mRNA 3'-UTR. RNA binding results in a clear conformational change analogous to the Venus fly trap mechanism. The sequence is that of Cytoplasmic polyadenylation element-binding protein 4 (cpeb4) from Danio rerio (Zebrafish).